A 184-amino-acid chain; its full sequence is Large ribosomal subunit protein eL13 (184 aa).

Residues 28 to 53 (PARKERRRQARKAKAQRIAPRPASGP) form a disordered region. The segment covering 31 to 42 (KERRRQARKAKA) has biased composition (basic residues).

It belongs to the eukaryotic ribosomal protein eL13 family.

In Schistosoma mansoni (Blood fluke), this protein is Large ribosomal subunit protein eL13 (RPL13).